We begin with the raw amino-acid sequence, 216 residues long: Uracil phosphoribosyltransferase (216 aa).

5-phospho-alpha-D-ribose 1-diphosphate is bound by residues Arg-85, Arg-110, and 135–143 (DPMVATGYS). Residues Ile-200 and 205-207 (GDA) contribute to the uracil site. A 5-phospho-alpha-D-ribose 1-diphosphate-binding site is contributed by Asp-206.

It belongs to the UPRTase family. It depends on Mg(2+) as a cofactor.

It carries out the reaction UMP + diphosphate = 5-phospho-alpha-D-ribose 1-diphosphate + uracil. Its pathway is pyrimidine metabolism; UMP biosynthesis via salvage pathway; UMP from uracil: step 1/1. With respect to regulation, allosterically activated by GTP. Catalyzes the conversion of uracil and 5-phospho-alpha-D-ribose 1-diphosphate (PRPP) to UMP and diphosphate. The chain is Uracil phosphoribosyltransferase from Burkholderia lata (strain ATCC 17760 / DSM 23089 / LMG 22485 / NCIMB 9086 / R18194 / 383).